The chain runs to 220 residues: Guanylate kinase (220 aa).

Residues 15 to 194 form the Guanylate kinase-like domain; sequence GLMLVISSPS…AFEGIEAIVK (180 aa). 22 to 29 lines the ATP pocket; sequence SPSGAGKS.

It belongs to the guanylate kinase family.

It is found in the cytoplasm. It carries out the reaction GMP + ATP = GDP + ADP. Functionally, essential for recycling GMP and indirectly, cGMP. The sequence is that of Guanylate kinase from Agrobacterium fabrum (strain C58 / ATCC 33970) (Agrobacterium tumefaciens (strain C58)).